The chain runs to 109 residues: T cell receptor alpha variable 25 (109 aa).

Positions M1–G19 are cleaved as a signal peptide. An Ig-like domain is found at Q20–G109. C41 and C107 are disulfide-bonded. 2 N-linked (GlcNAc...) asparagine glycosylation sites follow: N42 and N89.

In terms of assembly, alpha-beta TR is a heterodimer composed of an alpha and beta chain; disulfide-linked. The alpha-beta TR is associated with the transmembrane signaling CD3 coreceptor proteins to form the TR-CD3 (TcR or TCR). The assembly of alpha-beta TR heterodimers with CD3 occurs in the endoplasmic reticulum where a single alpha-beta TR heterodimer associates with one CD3D-CD3E heterodimer, one CD3G-CD3E heterodimer and one CD247 homodimer forming a stable octameric structure. CD3D-CD3E and CD3G-CD3E heterodimers preferentially associate with TR alpha and TR beta chains, respectively. The association of the CD247 homodimer is the last step of TcR assembly in the endoplasmic reticulum and is required for transport to the cell surface.

It localises to the cell membrane. In terms of biological role, v region of the variable domain of T cell receptor (TR) alpha chain that participates in the antigen recognition. Alpha-beta T cell receptors are antigen specific receptors which are essential to the immune response and are present on the cell surface of T lymphocytes. Recognize peptide-major histocompatibility (MH) (pMH) complexes that are displayed by antigen presenting cells (APC), a prerequisite for efficient T cell adaptive immunity against pathogens. Binding of alpha-beta TR to pMH complex initiates TR-CD3 clustering on the cell surface and intracellular activation of LCK that phosphorylates the ITAM motifs of CD3G, CD3D, CD3E and CD247 enabling the recruitment of ZAP70. In turn ZAP70 phosphorylates LAT, which recruits numerous signaling molecules to form the LAT signalosome. The LAT signalosome propagates signal branching to three major signaling pathways, the calcium, the mitogen-activated protein kinase (MAPK) kinase and the nuclear factor NF-kappa-B (NF-kB) pathways, leading to the mobilization of transcription factors that are critical for gene expression and essential for T cell growth and differentiation. The T cell repertoire is generated in the thymus, by V-(D)-J rearrangement. This repertoire is then shaped by intrathymic selection events to generate a peripheral T cell pool of self-MH restricted, non-autoaggressive T cells. Post-thymic interaction of alpha-beta TR with the pMH complexes shapes TR structural and functional avidity. This Homo sapiens (Human) protein is T cell receptor alpha variable 25.